The primary structure comprises 318 residues: Dehydration-responsive element-binding protein 2E (318 aa).

Residues 1-15 show a composition bias toward basic residues; it reads MESYGRKRAWKKGPT. The tract at residues 1 to 24 is disordered; that stretch reads MESYGRKRAWKKGPTRGKGGPQNA. A DNA-binding region (AP2/ERF) is located at residues 27-84; it reads EYRGVRQRTWGKWVAEIREPNKRTRLWLGSFATAEEAALAYDEAARRLYGPDAFLNLP. The tract at residues 140–178 is disordered; that stretch reads ELKNSSSSPTKPPPRTPTRANPPPPPLPTSSPCSTVTNS. The segment covering 149 to 168 has biased composition (pro residues); it reads TKPPPRTPTRANPPPPPLPT.

This sequence belongs to the AP2/ERF transcription factor family. ERF subfamily.

It localises to the nucleus. Functionally, probable transcriptional activator that binds to the DNA sequence 5'-[AG]CCGAC-3' of the cis-acting dehydration-responsive element (DRE). The chain is Dehydration-responsive element-binding protein 2E (DREB2E) from Oryza sativa subsp. japonica (Rice).